The sequence spans 293 residues: MLRGTAAGGTLRLVGIEASKVVEEARRRHNLSKTATAALGRTMAASALLAVVLGKRTDSRVTVRVDGGGPVGWIVAEGSTDGRLRGYVRQPEADLPPRESDGKLDVRGIVGTDGELAVTRLLDNGEPYTGSVRLQSGEIAEDVSRYLGASEQIPNAVLLGVYEEGGRVANAGGLLIQAMPGVTDETLAKLEANIAAMGMLTDQLRNGGLLGAMQQAAAGLDLQLATDAQPAHFSCRCSREKAIDSLKFFGAEERQEMIDEGGQEVLCHWCSEKYHLTPEEIAALDEGEARAEA.

2 disulfides stabilise this stretch: C235/C237 and C267/C270.

This sequence belongs to the HSP33 family. Under oxidizing conditions two disulfide bonds are formed involving the reactive cysteines. Under reducing conditions zinc is bound to the reactive cysteines and the protein is inactive.

It localises to the cytoplasm. Redox regulated molecular chaperone. Protects both thermally unfolding and oxidatively damaged proteins from irreversible aggregation. Plays an important role in the bacterial defense system toward oxidative stress. In Deinococcus radiodurans (strain ATCC 13939 / DSM 20539 / JCM 16871 / CCUG 27074 / LMG 4051 / NBRC 15346 / NCIMB 9279 / VKM B-1422 / R1), this protein is 33 kDa chaperonin.